Here is a 304-residue protein sequence, read N- to C-terminus: Glycine--tRNA ligase alpha subunit (304 aa).

Belongs to the class-II aminoacyl-tRNA synthetase family. In terms of assembly, tetramer of two alpha and two beta subunits.

The protein localises to the cytoplasm. The catalysed reaction is tRNA(Gly) + glycine + ATP = glycyl-tRNA(Gly) + AMP + diphosphate. This chain is Glycine--tRNA ligase alpha subunit, found in Vibrio atlanticus (strain LGP32) (Vibrio splendidus (strain Mel32)).